The primary structure comprises 296 residues: Bifunctional protein FolD (296 aa).

NADP(+) contacts are provided by residues 166–168, Ser191, and Ile232; that span reads GRS.

Belongs to the tetrahydrofolate dehydrogenase/cyclohydrolase family. In terms of assembly, homodimer.

It catalyses the reaction (6R)-5,10-methylene-5,6,7,8-tetrahydrofolate + NADP(+) = (6R)-5,10-methenyltetrahydrofolate + NADPH. The enzyme catalyses (6R)-5,10-methenyltetrahydrofolate + H2O = (6R)-10-formyltetrahydrofolate + H(+). It participates in one-carbon metabolism; tetrahydrofolate interconversion. Catalyzes the oxidation of 5,10-methylenetetrahydrofolate to 5,10-methenyltetrahydrofolate and then the hydrolysis of 5,10-methenyltetrahydrofolate to 10-formyltetrahydrofolate. The chain is Bifunctional protein FolD from Cereibacter sphaeroides (strain ATCC 17029 / ATH 2.4.9) (Rhodobacter sphaeroides).